We begin with the raw amino-acid sequence, 201 residues long: Elongation factor Ts (201 aa).

Positions 83 to 86 (TDFV) are involved in Mg(2+) ion dislocation from EF-Tu.

It belongs to the EF-Ts family.

The protein localises to the cytoplasm. In terms of biological role, associates with the EF-Tu.GDP complex and induces the exchange of GDP to GTP. It remains bound to the aminoacyl-tRNA.EF-Tu.GTP complex up to the GTP hydrolysis stage on the ribosome. This Methylacidiphilum infernorum (isolate V4) (Methylokorus infernorum (strain V4)) protein is Elongation factor Ts.